Consider the following 341-residue polypeptide: Endoglucanase 1 (341 aa).

The N-terminal stretch at 1–16 (MKTATLLAALSVLAGA) is a signal peptide. The propeptide occupies 17-30 (LAAPLAGDSALHRR). Glu-166 (proton donor) is an active-site residue. Residue Glu-275 is the Nucleophile of the active site.

The protein belongs to the glycosyl hydrolase 5 (cellulase A) family.

The enzyme catalyses Endohydrolysis of (1-&gt;4)-beta-D-glucosidic linkages in cellulose, lichenin and cereal beta-D-glucans.. Its function is as follows. Has endoglucanase activity on carboxymethyl-cellulose (CMC). This chain is Endoglucanase 1 (CMC1), found in Saitozyma flava (Cryptococcus flavus).